A 536-amino-acid chain; its full sequence is Bifunctional purine biosynthesis protein PurH (536 aa).

One can recognise an MGS-like domain in the interval 8–158; it reads IPAPDEVRIK…KNHAYVTVVT (151 aa).

It belongs to the PurH family.

It carries out the reaction (6R)-10-formyltetrahydrofolate + 5-amino-1-(5-phospho-beta-D-ribosyl)imidazole-4-carboxamide = 5-formamido-1-(5-phospho-D-ribosyl)imidazole-4-carboxamide + (6S)-5,6,7,8-tetrahydrofolate. The catalysed reaction is IMP + H2O = 5-formamido-1-(5-phospho-D-ribosyl)imidazole-4-carboxamide. It functions in the pathway purine metabolism; IMP biosynthesis via de novo pathway; 5-formamido-1-(5-phospho-D-ribosyl)imidazole-4-carboxamide from 5-amino-1-(5-phospho-D-ribosyl)imidazole-4-carboxamide (10-formyl THF route): step 1/1. The protein operates within purine metabolism; IMP biosynthesis via de novo pathway; IMP from 5-formamido-1-(5-phospho-D-ribosyl)imidazole-4-carboxamide: step 1/1. This is Bifunctional purine biosynthesis protein PurH from Sinorhizobium medicae (strain WSM419) (Ensifer medicae).